The following is a 104-amino-acid chain: Large ribosomal subunit protein bL21 (104 aa).

It belongs to the bacterial ribosomal protein bL21 family. As to quaternary structure, part of the 50S ribosomal subunit. Contacts protein L20.

Its function is as follows. This protein binds to 23S rRNA in the presence of protein L20. The polypeptide is Large ribosomal subunit protein bL21 (Streptococcus pneumoniae serotype 2 (strain D39 / NCTC 7466)).